We begin with the raw amino-acid sequence, 475 residues long: Putative aldehyde dehydrogenase SSP0762 (475 aa).

201–207 contributes to the NAD(+) binding site; sequence GDGQGVG. Residues Glu-245 and Cys-279 contribute to the active site.

Belongs to the aldehyde dehydrogenase family.

The enzyme catalyses an aldehyde + NAD(+) + H2O = a carboxylate + NADH + 2 H(+). The chain is Putative aldehyde dehydrogenase SSP0762 from Staphylococcus saprophyticus subsp. saprophyticus (strain ATCC 15305 / DSM 20229 / NCIMB 8711 / NCTC 7292 / S-41).